A 226-amino-acid polypeptide reads, in one-letter code: Endonuclease V (226 aa).

2 residues coordinate Mg(2+): D43 and D111.

The protein belongs to the endonuclease V family. The cofactor is Mg(2+).

It is found in the cytoplasm. The enzyme catalyses Endonucleolytic cleavage at apurinic or apyrimidinic sites to products with a 5'-phosphate.. Its function is as follows. DNA repair enzyme involved in the repair of deaminated bases. Selectively cleaves double-stranded DNA at the second phosphodiester bond 3' to a deoxyinosine leaving behind the intact lesion on the nicked DNA. This Nocardia farcinica (strain IFM 10152) protein is Endonuclease V.